Here is a 170-residue protein sequence, read N- to C-terminus: 6,7-dimethyl-8-ribityllumazine synthase 2 (170 aa).

5-amino-6-(D-ribitylamino)uracil contacts are provided by residues Trp-25, 59 to 61, and 83 to 85; these read AFE and LVV. The active-site Proton donor is the Arg-91. Ser-116 serves as a coordination point for 5-amino-6-(D-ribitylamino)uracil. (2S)-2-hydroxy-3-oxobutyl phosphate is bound at residue His-130.

The protein belongs to the DMRL synthase family. As to quaternary structure, forms an icosahedral capsid composed of 60 subunits, arranged as a dodecamer of pentamers.

The enzyme catalyses (2S)-2-hydroxy-3-oxobutyl phosphate + 5-amino-6-(D-ribitylamino)uracil = 6,7-dimethyl-8-(1-D-ribityl)lumazine + phosphate + 2 H2O + H(+). The protein operates within cofactor biosynthesis; riboflavin biosynthesis; riboflavin from 2-hydroxy-3-oxobutyl phosphate and 5-amino-6-(D-ribitylamino)uracil: step 1/2. Catalyzes the formation of 6,7-dimethyl-8-ribityllumazine by condensation of 5-amino-6-(D-ribitylamino)uracil with 3,4-dihydroxy-2-butanone 4-phosphate. This is the penultimate step in the biosynthesis of riboflavin. The protein is 6,7-dimethyl-8-ribityllumazine synthase 2 of Pseudomonas syringae pv. tomato (strain ATCC BAA-871 / DC3000).